Reading from the N-terminus, the 565-residue chain is Atlastin-2 (565 aa).

Topologically, residues methionine 1–alanine 458 are cytoplasmic. One can recognise a GB1/RHD3-type G domain in the interval aspartate 73 to asparagine 318. Arginine 86, lysine 87, glycine 88, lysine 89, serine 90, phenylalanine 91, glutamine 157, arginine 226, and aspartate 227 together coordinate GDP. GTP contacts are provided by arginine 86, lysine 87, glycine 88, lysine 89, serine 90, and phenylalanine 91. Serine 90 is a binding site for Mg(2+). The GTP site is built by arginine 226 and aspartate 227. A coiled-coil region spans residues leucine 238 to isoleucine 266. At lysine 252 the chain carries N6-methyllysine. Residues valine 285 and asparagine 288 each coordinate GDP. Position 285 (valine 285) interacts with GTP. The tract at residues methionine 356–glycine 447 is 3HB (three-helix bundle) domain. The tract at residues lysine 448–threonine 456 is linker. A helical membrane pass occupies residues threonine 459–leucine 479. Residues asparagine 480–serine 481 are Lumenal-facing. Residues isoleucine 482 to tyrosine 502 traverse the membrane as a helical segment. Over valine 503–aspartate 565 the chain is Cytoplasmic. The interval lysine 529–aspartate 565 is autoinhibitory domain.

Belongs to the TRAFAC class dynamin-like GTPase superfamily. GB1/RHD3 GTPase family. GB1 subfamily. As to quaternary structure, monomeric and homodimeric. The homodimer, transiently formed by two molecules on opposing membranes, is the active form mediating ER membrane fusion. Interacts with REEP5 and RTN3; these proteins are involved in endoplasmic reticulum tubular network organization. Interacts with ZFYVE27; both proteins are involved in endoplasmic reticulum tubular network organization.

It localises to the endoplasmic reticulum membrane. The catalysed reaction is GTP + H2O = GDP + phosphate + H(+). Atlastin-2 (ATL2) is a membrane-anchored GTPase that mediates the GTP-dependent fusion of endoplasmic reticulum (ER) membranes, maintaining the continuous ER network. It facilitates the formation of three-way junctions where ER tubules intersect. Two atlastin-2 on neighboring ER tubules bind GTP and form loose homodimers through the GB1/RHD3-type G domains and 3HB regions. Upon GTP hydrolysis, the 3HB regions tighten, pulling the membranes together to drive their fusion. After fusion, the homodimer disassembles upon release of inorganic phosphate (Pi). Subsequently, GDP dissociates, resetting the monomers to a conformation ready for a new fusion cycle. In Macaca fascicularis (Crab-eating macaque), this protein is Atlastin-2.